The chain runs to 410 residues: Voltage-dependent chloride channel 2, chloroplastic (410 aa).

Over 1-110 the chain is Lumenal, thylakoid; the sequence is MYQSMNLSFS…RHVSSSPSSR (110 aa). The chain crosses the membrane as a helical span at residues 111–131; the sequence is VILSLIPPVFFFTTVAILIAG. Residues 132-147 are Stromal-facing; that stretch reads YNSAVDLDWLPDFFPV. Residues 148-168 traverse the membrane as a helical segment; it reads LRASPLPYQLTAPALALLLVF. At 169–315 the chain is on the lumenal, thylakoid side; the sequence is RTEASYSRFE…PLSYTRLTSR (147 aa). 2 helical membrane-spanning segments follow: residues 316–336 and 337–357; these read FLVLWHLTLPVILWDDCHWNV and VPATFISAASLFCIEEVGVLI. Residues 358–410 lie on the Lumenal, thylakoid side of the membrane; that stretch reads EEPFSMLALDELCAMVLSNSDEAVESKEVIRNRIIAKKRILEIKHSSNGWHKS.

Belongs to the anion channel-forming bestrophin (TC 1.A.46) family. Voltage-dependent chloride channel subfamily. As to expression, mostly expressed in flowers and, to a lower extent, in leaves, stems and roots.

The protein localises to the plastid. It localises to the chloroplast thylakoid membrane. It carries out the reaction chloride(in) = chloride(out). In terms of biological role, voltage-dependent chloride (Cl) channel probably contributing to proton motive force (PMF) partitioning across the thylakoid membrane by anion influx into the lumen. Influences thylakoid ultrastructure, including lumen size and organization. This is Voltage-dependent chloride channel 2, chloroplastic from Arabidopsis thaliana (Mouse-ear cress).